A 132-amino-acid polypeptide reads, in one-letter code: MAVTHSVGDMLTKIRNASRVKHESVDLKMSKINKSILDILREEGYIKGYNIFDNKGISFIKAILNYDSKRNPAINRIDAISTPGRKVYSSYKNMPRIKNGYGILIVSSSKGVITGKQAKDNKVGGELICSVW.

Belongs to the universal ribosomal protein uS8 family. In terms of assembly, part of the 30S ribosomal subunit. Contacts proteins S5 and S12.

In terms of biological role, one of the primary rRNA binding proteins, it binds directly to 16S rRNA central domain where it helps coordinate assembly of the platform of the 30S subunit. The protein is Small ribosomal subunit protein uS8 of Borrelia hermsii (strain HS1 / DAH).